The primary structure comprises 1037 residues: Ras guanine nucleotide exchange factor E (1037 aa).

Residues 5–35 (ECNNRIEYLQNKVLELESLNENLKGQLEYFQ) are a coiled coil. Disordered stretches follow at residues 65 to 100 (NNNNNSNSNSNSNNNSSNSNNNSYSNFNSNNNTTNN), 114 to 150 (TNSNSTNSSPYIFGNNKDNSNNSNNSNNNNSNTELSN), 166 to 387 (TTTT…PLSN), 414 to 437 (TVNMIGGGGTPRSNNSSNGSLYHS), 451 to 472 (SSLSLSSTSPSPNNSQQNLTNP), 602 to 628 (INSNNQNNQNNNNNNNNNNNNNNNQLE), 907 to 935 (NTTTTTTTTTTTTTTNTTTSNNNNQQQLN), and 1004 to 1037 (EKETSSFDSGYGSVSDRPSKKEFSVTSLLNSFKS). Low complexity-rich tracts occupy residues 114 to 145 (TNSNSTNSSPYIFGNNKDNSNNSNNSNNNNSN) and 166 to 200 (TTTTINTSNSNNSNNNNNNNNNNNNNNNNNNNNNN). Positions 229 to 239 (PTSSRNSPTNK) are enriched in polar residues. Residues 240–276 (SSPQFLSPLSKSPLSQSTQSTTVSSPSPSWTTTVPQS) are compositionally biased toward low complexity. The span at 282–300 (TIVQSKSPYSPDTNISNKL) shows a compositional bias: polar residues. Over residues 318–360 (SPSKNSPRSLNSNNNNSSATTSITTPPTTSTPTPTTSTTTTTT) the composition is skewed to low complexity. Residues 361-370 (TERRPEDRRS) are compositionally biased toward basic and acidic residues. Polar residues-rich tracts occupy residues 372–387 (TSPFPNVGTTTPPLSN) and 424–437 (PRSNNSSNGSLYHS). Residues 496–694 (NGFIVKGGTI…NLKRLLTNDR (199 aa)) form the N-terminal Ras-GEF domain. Positions 726–1003 (DPTEIARQLT…YKLSLICEPK (278 aa)) constitute a Ras-GEF domain. Over residues 907–930 (NTTTTTTTTTTTTTTNTTTSNNNN) the composition is skewed to low complexity. Residues 1027–1037 (SVTSLLNSFKS) are compositionally biased toward polar residues.

Its function is as follows. Promotes the exchange of Ras-bound GDP by GTP. Seems to play a role in chemotaxis. This chain is Ras guanine nucleotide exchange factor E (gefE), found in Dictyostelium discoideum (Social amoeba).